The chain runs to 163 residues: Nucleotide-binding protein Pnap_1080 (163 aa).

It belongs to the YajQ family.

Nucleotide-binding protein. This Polaromonas naphthalenivorans (strain CJ2) protein is Nucleotide-binding protein Pnap_1080.